Reading from the N-terminus, the 296-residue chain is Glycine--tRNA ligase alpha subunit (296 aa).

The protein belongs to the class-II aminoacyl-tRNA synthetase family. Tetramer of two alpha and two beta subunits.

The protein localises to the cytoplasm. The enzyme catalyses tRNA(Gly) + glycine + ATP = glycyl-tRNA(Gly) + AMP + diphosphate. The polypeptide is Glycine--tRNA ligase alpha subunit (Synechococcus sp. (strain CC9605)).